A 209-amino-acid polypeptide reads, in one-letter code: Peptide methionine sulfoxide reductase MsrA (209 aa).

The active site involves cysteine 51.

The protein belongs to the MsrA Met sulfoxide reductase family.

The catalysed reaction is L-methionyl-[protein] + [thioredoxin]-disulfide + H2O = L-methionyl-(S)-S-oxide-[protein] + [thioredoxin]-dithiol. It carries out the reaction [thioredoxin]-disulfide + L-methionine + H2O = L-methionine (S)-S-oxide + [thioredoxin]-dithiol. In terms of biological role, has an important function as a repair enzyme for proteins that have been inactivated by oxidation. Catalyzes the reversible oxidation-reduction of methionine sulfoxide in proteins to methionine. In Vibrio vulnificus (strain CMCP6), this protein is Peptide methionine sulfoxide reductase MsrA.